A 488-amino-acid chain; its full sequence is Cobyric acid synthase (488 aa).

Residues 255 to 442 (ALKIAVPVLP…LHGLFGSDAY (188 aa)) enclose the GATase cobBQ-type domain. C337 acts as the Nucleophile in catalysis. The active site involves H434.

This sequence belongs to the CobB/CobQ family. CobQ subfamily.

The protein operates within cofactor biosynthesis; adenosylcobalamin biosynthesis. Catalyzes amidations at positions B, D, E, and G on adenosylcobyrinic A,C-diamide. NH(2) groups are provided by glutamine, and one molecule of ATP is hydrogenolyzed for each amidation. This is Cobyric acid synthase from Rhizobium johnstonii (strain DSM 114642 / LMG 32736 / 3841) (Rhizobium leguminosarum bv. viciae).